The following is a 354-amino-acid chain: GTPase Obg (354 aa).

An Obg domain is found at 1–159 (MKFVDEVKIH…RDLVLELKLL (159 aa)). One can recognise an OBG-type G domain in the interval 160–333 (ADVGIVGYPN…LLDAVGRALF (174 aa)). Residues 166 to 173 (GYPNAGKS), 191 to 195 (FTTLT), 212 to 215 (DIPG), 283 to 286 (TKID), and 314 to 316 (SAV) each bind GTP. S173 and T193 together coordinate Mg(2+).

This sequence belongs to the TRAFAC class OBG-HflX-like GTPase superfamily. OBG GTPase family. In terms of assembly, monomer. Mg(2+) serves as cofactor.

It is found in the cytoplasm. Functionally, an essential GTPase which binds GTP, GDP and possibly (p)ppGpp with moderate affinity, with high nucleotide exchange rates and a fairly low GTP hydrolysis rate. Plays a role in control of the cell cycle, stress response, ribosome biogenesis and in those bacteria that undergo differentiation, in morphogenesis control. The sequence is that of GTPase Obg from Anaeromyxobacter dehalogenans (strain 2CP-C).